The primary structure comprises 321 residues: Phosphate acyltransferase (321 aa).

This sequence belongs to the PlsX family. As to quaternary structure, homodimer. Probably interacts with PlsY.

The protein resides in the cytoplasm. It carries out the reaction a fatty acyl-[ACP] + phosphate = an acyl phosphate + holo-[ACP]. It functions in the pathway lipid metabolism; phospholipid metabolism. Its function is as follows. Catalyzes the reversible formation of acyl-phosphate (acyl-PO(4)) from acyl-[acyl-carrier-protein] (acyl-ACP). This enzyme utilizes acyl-ACP as fatty acyl donor, but not acyl-CoA. The sequence is that of Phosphate acyltransferase from Chlamydia trachomatis serovar A (strain ATCC VR-571B / DSM 19440 / HAR-13).